The chain runs to 65 residues: Beta-defensin 106A (65 aa).

Positions 1-20 (MRTFLFLFAVLFFLTPAKNA) are cleaved as a signal peptide. Cystine bridges form between cysteine 26–cysteine 53, cysteine 33–cysteine 47, and cysteine 37–cysteine 54.

Belongs to the beta-defensin family. Monomer. Interacts with CCR2 (via extracellular N-terminal region); this interaction may preferentially require specific tyrosine sulfation on CCR2.

It is found in the secreted. Its subcellular location is the membrane. Has antibacterial activity. Acts as a ligand for C-C chemokine receptor CCR2. This is Beta-defensin 106A (DEFB106A) from Gorilla gorilla gorilla (Western lowland gorilla).